The sequence spans 120 residues: Large ribosomal subunit protein uL18 (120 aa).

It belongs to the universal ribosomal protein uL18 family. As to quaternary structure, part of the 50S ribosomal subunit; part of the 5S rRNA/L5/L18/L25 subcomplex. Contacts the 5S and 23S rRNAs.

In terms of biological role, this is one of the proteins that bind and probably mediate the attachment of the 5S RNA into the large ribosomal subunit, where it forms part of the central protuberance. This chain is Large ribosomal subunit protein uL18, found in Oleidesulfovibrio alaskensis (strain ATCC BAA-1058 / DSM 17464 / G20) (Desulfovibrio alaskensis).